Consider the following 623-residue polypeptide: Glutathione import ATP-binding protein GsiA (623 aa).

ABC transporter domains are found at residues valine 15 to leucine 269 and leucine 314 to leucine 564. Residues glycine 49 to serine 56 and glycine 357 to serine 364 contribute to the ATP site.

Belongs to the ABC transporter superfamily. Glutathione importer (TC 3.A.1.5.11) family. As to quaternary structure, the complex is composed of two ATP-binding proteins (GsiA), two transmembrane proteins (GsiC and GsiD) and a solute-binding protein (GsiB).

It localises to the cell inner membrane. It carries out the reaction glutathione(out) + ATP + H2O = glutathione(in) + ADP + phosphate + H(+). Part of the ABC transporter complex GsiABCD involved in glutathione import. Responsible for energy coupling to the transport system. The protein is Glutathione import ATP-binding protein GsiA of Escherichia coli O6:H1 (strain CFT073 / ATCC 700928 / UPEC).